The chain runs to 545 residues: ATP synthase subunit alpha (545 aa).

ATP is bound at residue 172 to 179 (GDRKTGKT).

Belongs to the ATPase alpha/beta chains family. As to quaternary structure, F-type ATPases have 2 components, CF(1) - the catalytic core - and CF(0) - the membrane proton channel. CF(1) has five subunits: alpha(3), beta(3), gamma(1), delta(1), epsilon(1). CF(0) has three main subunits: a(1), b(2) and c(9-12). The alpha and beta chains form an alternating ring which encloses part of the gamma chain. CF(1) is attached to CF(0) by a central stalk formed by the gamma and epsilon chains, while a peripheral stalk is formed by the delta and b chains.

It is found in the cell membrane. The catalysed reaction is ATP + H2O + 4 H(+)(in) = ADP + phosphate + 5 H(+)(out). Functionally, produces ATP from ADP in the presence of a proton gradient across the membrane. The alpha chain is a regulatory subunit. This chain is ATP synthase subunit alpha, found in Nocardia farcinica (strain IFM 10152).